Consider the following 85-residue polypeptide: Large ribosomal subunit protein bL27 (85 aa).

The interval methionine 1–glycine 22 is disordered.

This sequence belongs to the bacterial ribosomal protein bL27 family.

The sequence is that of Large ribosomal subunit protein bL27 from Idiomarina loihiensis (strain ATCC BAA-735 / DSM 15497 / L2-TR).